Reading from the N-terminus, the 199-residue chain is Thymidylate kinase (199 aa).

An ATP-binding site is contributed by 7-14; sequence GTEGVGKT.

The protein belongs to the thymidylate kinase family.

The enzyme catalyses dTMP + ATP = dTDP + ADP. In terms of biological role, phosphorylation of dTMP to form dTDP in both de novo and salvage pathways of dTTP synthesis. This Acinetobacter baumannii (strain ATCC 17978 / DSM 105126 / CIP 53.77 / LMG 1025 / NCDC KC755 / 5377) protein is Thymidylate kinase.